A 457-amino-acid polypeptide reads, in one-letter code: Multidrug resistance protein MdtK (457 aa).

12 consecutive transmembrane segments (helical) span residues 11 to 31, 53 to 73, 93 to 113, 127 to 147, 160 to 180, 191 to 211, 243 to 263, 276 to 296, 316 to 336, 350 to 370, 387 to 407, and 418 to 438; these read LLALAIPVILAQVAQTAMGFV, IWLPAILFGHGLLLALTPVVA, WLAGFVSVLIMVVLWNAGYII, AVGYLRALLWGAPGYLFFQVA, GMVMGFIGLLVNIPVNYIFIY, VGCGVATASVYWVMFASMLWW, LPIALALFFEVTLFAVVALLV, IALNFSSLMFVLPLSLAAAVT, RTGVGVGVCLAVFTAIFTVLM, VVLLASHLMLLAAIYQISDSI, IFFITFTAYWVLGLPSGYLLA, and PAGFWCGFIIGLTSAAIMMML.

Belongs to the multi antimicrobial extrusion (MATE) (TC 2.A.66.1) family. MdtK subfamily.

It localises to the cell inner membrane. Functionally, multidrug efflux pump that functions probably as a Na(+)/drug antiporter. This Klebsiella pneumoniae (strain 342) protein is Multidrug resistance protein MdtK.